The chain runs to 444 residues: Proline--tRNA ligase (444 aa).

The protein belongs to the class-II aminoacyl-tRNA synthetase family. ProS type 2 subfamily. As to quaternary structure, homodimer.

It is found in the cytoplasm. The catalysed reaction is tRNA(Pro) + L-proline + ATP = L-prolyl-tRNA(Pro) + AMP + diphosphate. Its function is as follows. Catalyzes the attachment of proline to tRNA(Pro) in a two-step reaction: proline is first activated by ATP to form Pro-AMP and then transferred to the acceptor end of tRNA(Pro). This is Proline--tRNA ligase from Bradyrhizobium sp. (strain BTAi1 / ATCC BAA-1182).